The primary structure comprises 644 residues: Transmembrane 9 superfamily member 9 (644 aa).

The signal sequence occupies residues 1–27; the sequence is MEFYRSSRRLQILGSVILLLSIHVAHS. The Lumenal portion of the chain corresponds to 28–281; sequence FYLPGVAPQD…YLLMSDNQIH (254 aa). Residues 282–302 form a helical membrane-spanning segment; the sequence is WFSIVNSLMIVLFLSGMVAMI. Topologically, residues 303–351 are cytoplasmic; the sequence is MLRTLYRDISRYNELETQEEAQEETGWKLVHGDVFRPPANSDLLCVYVG. The chain crosses the membrane as a helical span at residues 352 to 372; that stretch reads TGVQCLGMVLVTMIFAMLGFL. Residues 373–377 are Lumenal-facing; that stretch reads SPSNR. The chain crosses the membrane as a helical span at residues 378-398; the sequence is GGLMTAMLLLWVFMGLFAGYA. Topologically, residues 399–418 are cytoplasmic; that stretch reads SSRLYKMFKGTEWKRIAFRT. A helical membrane pass occupies residues 419 to 439; it reads AFLFPAVVSAIFFVLNALIWG. Residues 440-451 lie on the Lumenal side of the membrane; the sequence is QKSSGAVPFGTM. A helical transmembrane segment spans residues 452–472; it reads FALIFLWFGISVPLVFVGAYL. The Cytoplasmic portion of the chain corresponds to 473-501; the sequence is GFKKPPLDDPVKTNKIPRQIPEQAWYMNP. Residues 502–522 traverse the membrane as a helical segment; the sequence is IFSILIGGILPFGAVFIELFF. At 523-534 the chain is on the lumenal side; the sequence is ILTSIWLNQFYY. The helical transmembrane segment at 535 to 555 threads the bilayer; sequence IFGFLFLVFVILMVTCAEITI. Residues 556–573 lie on the Cytoplasmic side of the membrane; that stretch reads VLCYFQLCSEDYLWWWRS. A helical membrane pass occupies residues 574–594; it reads YLTSGSSAVYLFLYAAFYFFT. Residues 595–600 lie on the Lumenal side of the membrane; it reads KLQITK. Residues 601–621 traverse the membrane as a helical segment; sequence LVSAMLYFGYMLIASYAFFVL. Topologically, residues 622 to 644 are cytoplasmic; the sequence is TGTIGFYACLWFTRLIYSSVKID. Residues 633 to 638 carry the Endoplasmic reticulum export signal motif; the sequence is FTRLIY. The Golgi retention signal signature appears at 642 to 644; it reads KID.

The protein belongs to the nonaspanin (TM9SF) (TC 9.A.2) family.

It is found in the endosome membrane. It localises to the golgi apparatus membrane. The polypeptide is Transmembrane 9 superfamily member 9 (Arabidopsis thaliana (Mouse-ear cress)).